Reading from the N-terminus, the 585-residue chain is Aspartate--tRNA(Asp/Asn) ligase (585 aa).

Position 175 (Glu175) interacts with L-aspartate. The interval 199-202 (QLFK) is aspartate. Arg221 contacts L-aspartate. ATP is bound by residues 221–223 (RDE) and Gln230. His448 contacts L-aspartate. Residue Glu482 coordinates ATP. L-aspartate is bound at residue Arg489. ATP is bound at residue 534–537 (GLDR).

This sequence belongs to the class-II aminoacyl-tRNA synthetase family. Type 1 subfamily. As to quaternary structure, homodimer.

The protein localises to the cytoplasm. It catalyses the reaction tRNA(Asx) + L-aspartate + ATP = L-aspartyl-tRNA(Asx) + AMP + diphosphate. Functionally, aspartyl-tRNA synthetase with relaxed tRNA specificity since it is able to aspartylate not only its cognate tRNA(Asp) but also tRNA(Asn). Reaction proceeds in two steps: L-aspartate is first activated by ATP to form Asp-AMP and then transferred to the acceptor end of tRNA(Asp/Asn). This Natranaerobius thermophilus (strain ATCC BAA-1301 / DSM 18059 / JW/NM-WN-LF) protein is Aspartate--tRNA(Asp/Asn) ligase.